Reading from the N-terminus, the 448-residue chain is Noelin-2 (448 aa).

An N-terminal signal peptide occupies residues 1 to 14 (MRKLRQTGTTIAGG). Coiled coils occupy residues 52–79 (RDGR…LELR) and 130–187 (LEQY…AQKL). Residues N68, N149, N269, N304, N393, and N435 are each glycosylated (N-linked (GlcNAc...) asparagine). The Olfactomedin-like domain maps to 188 to 440 (GCGKLTGVSN…QVLYNVTLFH (253 aa)). Residues C189 and C371 are joined by a disulfide bond.

Peripherally associated with AMPAR complex. AMPAR complex consists of an inner core made of 4 pore-forming GluA/GRIA proteins (GRIA1, GRIA2, GRIA3 and GRIA4) and 4 major auxiliary subunits arranged in a twofold symmetry. One of the two pairs of distinct binding sites is occupied either by CNIH2, CNIH3 or CACNG2, CACNG3. The other harbors CACNG2, CACNG3, CACNG4, CACNG8 or GSG1L. This inner core of AMPAR complex is complemented by outer core constituents binding directly to the GluA/GRIA proteins at sites distinct from the interaction sites of the inner core constituents. Outer core constituents include at least PRRT1, PRRT2, CKAMP44/SHISA9, FRRS1L and NRN1. The proteins of the inner and outer core serve as a platform for other, more peripherally associated AMPAR constituents, including OLFM2. Alone or in combination, these auxiliary subunits control the gating and pharmacology of the AMPAR complex and profoundly impact their biogenesis and protein processing. Interacts with GRIA2. Interacts with OLFM1 and OLFM3. Interacts with SRF; the interaction promotes dissociation of SRF from the transcriptional repressor HEY2. Interacts with RUNX2. Expressed in the brain (at protein level). In the developing eye, first detected at 12 dpc in the retinal pigmented epithelium and preferentially expressed in differentiating retinal ganglion cells between 15 and 18 dpc. In the brain, expression is detected mainly in the olfactory bulb, cortex, piriform cortex, olfactory trabeculae, and inferior and superior colliculus. In the adult eye, expression is detected mainly in retinal ganglion cells. Expressed in carotid arteries.

It localises to the secreted. It is found in the synapse. The protein resides in the membrane. The protein localises to the nucleus. Its subcellular location is the cytoplasm. Functionally, involved in transforming growth factor beta (TGF-beta)-induced smooth muscle differentiation. TGF-beta induces expression and nuclear translocation of OLFM2 where it binds to SRF, causing its dissociation from the transcriptional repressor HEY2/HERP1 and facilitating binding of SRF to target genes. Plays a role in AMPAR complex organization. Is a regulator of vascular smooth-muscle cell (SMC) phenotypic switching, that acts by promoting RUNX2 and inhibiting MYOCD binding to SRF. SMC phenotypic switching is the process through which vascular SMCs undergo transition between a quiescent contractile phenotype and a proliferative synthetic phenotype in response to pathological stimuli. SMC phenotypic plasticity is essential for vascular development and remodeling. In Mus musculus (Mouse), this protein is Noelin-2 (Olfm2).